Here is a 353-residue protein sequence, read N- to C-terminus: Photosystem II D2 protein (353 aa).

Thr2 carries the post-translational modification N-acetylthreonine. At Thr2 the chain carries Phosphothreonine. A helical transmembrane segment spans residues 41-61 (CAYFALGGWFTGTTFVTSWYT). His118 serves as a coordination point for chlorophyll a. The chain crosses the membrane as a helical span at residues 125–141 (GFMLRQFELARSVQLRP). Residues Gln130 and Asn143 each contribute to the pheophytin a site. Residues 153 to 166 (VFVSVFLIYPLGQS) traverse the membrane as a helical segment. A chlorophyll a-binding site is contributed by His198. Residues 208–228 (AALLCAIHGATVENTLFEDGD) traverse the membrane as a helical segment. A plastoquinone is bound by residues His215 and Phe262. His215 is a binding site for Fe cation. His269 provides a ligand contact to Fe cation. A helical membrane pass occupies residues 279–295 (GLWMSAIGVVGLALNLR).

This sequence belongs to the reaction center PufL/M/PsbA/D family. As to quaternary structure, PSII is composed of 1 copy each of membrane proteins PsbA, PsbB, PsbC, PsbD, PsbE, PsbF, PsbH, PsbI, PsbJ, PsbK, PsbL, PsbM, PsbT, PsbX, PsbY, PsbZ, Psb30/Ycf12, at least 3 peripheral proteins of the oxygen-evolving complex and a large number of cofactors. It forms dimeric complexes. Requires The D1/D2 heterodimer binds P680, chlorophylls that are the primary electron donor of PSII, and subsequent electron acceptors. It shares a non-heme iron and each subunit binds pheophytin, quinone, additional chlorophylls, carotenoids and lipids. There is also a Cl(-1) ion associated with D1 and D2, which is required for oxygen evolution. The PSII complex binds additional chlorophylls, carotenoids and specific lipids. as cofactor. In terms of processing, phosphorylated on threonine residue(s); phosphorylation increases with increasing light levels.

It is found in the plastid. It localises to the chloroplast thylakoid membrane. The catalysed reaction is 2 a plastoquinone + 4 hnu + 2 H2O = 2 a plastoquinol + O2. Functionally, photosystem II (PSII) is a light-driven water:plastoquinone oxidoreductase that uses light energy to abstract electrons from H(2)O, generating O(2) and a proton gradient subsequently used for ATP formation. It consists of a core antenna complex that captures photons, and an electron transfer chain that converts photonic excitation into a charge separation. The D1/D2 (PsbA/PsbD) reaction center heterodimer binds P680, the primary electron donor of PSII as well as several subsequent electron acceptors. D2 is needed for assembly of a stable PSII complex. The chain is Photosystem II D2 protein from Marchantia polymorpha (Common liverwort).